The sequence spans 127 residues: Small ribosomal subunit protein uS11 (127 aa).

Belongs to the universal ribosomal protein uS11 family. Part of the 30S ribosomal subunit. Interacts with proteins S7 and S18. Binds to IF-3.

Functionally, located on the platform of the 30S subunit, it bridges several disparate RNA helices of the 16S rRNA. Forms part of the Shine-Dalgarno cleft in the 70S ribosome. The sequence is that of Small ribosomal subunit protein uS11 from Streptococcus suis (strain 98HAH33).